The chain runs to 155 residues: Myelin basic protein (155 aa).

A disordered region spans residues 1–72 (MASATTSDHA…HQGARRQTDD (72 aa)). Ala2 bears the N-acetylalanine; in forms C1, C2, C3 and C8 mark. At Gln12 the chain carries Deamidated glutamine; in forms C1, C2 and C3. Positions 37 to 49 (GSRKVPEKGKEPA) are enriched in basic and acidic residues. 2 positions are modified to phosphoserine; in forms C1, C2 and C3: Ser73 and Ser84. The segment at 113–155 (RAHYGAAGSSKSKDGFRGRRDGSGTLSSFFKMGKKGEGSPARR) is disordered. Phosphoserine; in forms C1 and C3 is present on residues Ser121 and Ser122. Positions 123–134 (KSKDGFRGRRDG) are enriched in basic and acidic residues. Phosphoserine; in forms C1, C2 and C3 occurs at positions 135, 139, and 140.

Belongs to the myelin basic protein family. In terms of processing, several charge isomers are produced as a result of optional post-translational modifications, such as phosphorylation, deamidation and citrullination. Dogfish MBP contains four major components designated as C1, C2, C3 and C8. C1 and C3, but not C2 are phosphorylated at either Ser-121 or Ser-122; C2 is phosphorylated at 2 or 3 sites among Ser-135, Ser-139 and Ser-140. Hydroxyproline and citrulline are present but were not identified in either C1, C2 or C3, which suggests their presence in C8.

It is found in the myelin membrane. Functionally, this protein may function to maintain proper structure of myelin. In Squalus acanthias (Spiny dogfish), this protein is Myelin basic protein (MBP).